The sequence spans 126 residues: Small ribosomal subunit protein uS13 (126 aa).

The tract at residues 101–126 (QKTKNNCRTRKGKKKTVANKKKKINK) is disordered.

This sequence belongs to the universal ribosomal protein uS13 family. As to quaternary structure, part of the 30S ribosomal subunit. Forms a loose heterodimer with protein S19. Forms two bridges to the 50S subunit in the 70S ribosome.

In terms of biological role, located at the top of the head of the 30S subunit, it contacts several helices of the 16S rRNA. In the 70S ribosome it contacts the 23S rRNA (bridge B1a) and protein L5 of the 50S subunit (bridge B1b), connecting the 2 subunits; these bridges are implicated in subunit movement. Contacts the tRNAs in the A and P-sites. The protein is Small ribosomal subunit protein uS13 of Karelsulcia muelleri (strain GWSS) (Sulcia muelleri).